The primary structure comprises 88 residues: Small ribosomal subunit protein bS20 (88 aa).

It belongs to the bacterial ribosomal protein bS20 family.

In terms of biological role, binds directly to 16S ribosomal RNA. This chain is Small ribosomal subunit protein bS20, found in Mycoplasmopsis synoviae (strain 53) (Mycoplasma synoviae).